A 247-amino-acid chain; its full sequence is 3-deoxy-manno-octulosonate cytidylyltransferase (247 aa).

It belongs to the KdsB family.

The protein resides in the cytoplasm. It catalyses the reaction 3-deoxy-alpha-D-manno-oct-2-ulosonate + CTP = CMP-3-deoxy-beta-D-manno-octulosonate + diphosphate. Its pathway is nucleotide-sugar biosynthesis; CMP-3-deoxy-D-manno-octulosonate biosynthesis; CMP-3-deoxy-D-manno-octulosonate from 3-deoxy-D-manno-octulosonate and CTP: step 1/1. It participates in bacterial outer membrane biogenesis; lipopolysaccharide biosynthesis. In terms of biological role, activates KDO (a required 8-carbon sugar) for incorporation into bacterial lipopolysaccharide in Gram-negative bacteria. This is 3-deoxy-manno-octulosonate cytidylyltransferase from Chlorobium phaeobacteroides (strain DSM 266 / SMG 266 / 2430).